Consider the following 411-residue polypeptide: Metacaspase-1B (411 aa).

Residues 1–97 form a disordered region; sequence MYHRHSAPPP…PPLEAQQFGN (97 aa). Residues 7 to 65 are compositionally biased toward pro residues; it reads APPPPGRSRGYPPPQQQWPPQPYQYLPYPPQGPPPAHTFPPPAHRSYPSPYPTPPPHSP. Catalysis depends on residues H198 and C254.

It belongs to the peptidase C14B family.

Functionally, involved in cell death (apoptosis). The chain is Metacaspase-1B (casB) from Neosartorya fischeri (strain ATCC 1020 / DSM 3700 / CBS 544.65 / FGSC A1164 / JCM 1740 / NRRL 181 / WB 181) (Aspergillus fischerianus).